The sequence spans 215 residues: Glycerol-3-phosphate acyltransferase (215 aa).

Helical transmembrane passes span methionine 1–threonine 21, isoleucine 57–tryptophan 77, methionine 85–glycine 105, valine 126–leucine 146, and valine 165–leucine 185.

The protein belongs to the PlsY family. In terms of assembly, probably interacts with PlsX.

Its subcellular location is the cell inner membrane. The enzyme catalyses an acyl phosphate + sn-glycerol 3-phosphate = a 1-acyl-sn-glycero-3-phosphate + phosphate. Its pathway is lipid metabolism; phospholipid metabolism. Functionally, catalyzes the transfer of an acyl group from acyl-phosphate (acyl-PO(4)) to glycerol-3-phosphate (G3P) to form lysophosphatidic acid (LPA). This enzyme utilizes acyl-phosphate as fatty acyl donor, but not acyl-CoA or acyl-ACP. The chain is Glycerol-3-phosphate acyltransferase from Crocosphaera subtropica (strain ATCC 51142 / BH68) (Cyanothece sp. (strain ATCC 51142)).